Reading from the N-terminus, the 261-residue chain is Phosphatidylglycerol--prolipoprotein diacylglyceryl transferase (261 aa).

The next 7 membrane-spanning stretches (helical) occupy residues Val-19 to Tyr-39, Leu-56 to Tyr-76, Trp-92 to Phe-112, Phe-126 to Gly-146, Gln-173 to Ala-193, Phe-199 to Phe-219, and Gly-227 to Ile-247. Arg-139 serves as a coordination point for a 1,2-diacyl-sn-glycero-3-phospho-(1'-sn-glycerol).

The protein belongs to the Lgt family.

It is found in the cell inner membrane. It carries out the reaction L-cysteinyl-[prolipoprotein] + a 1,2-diacyl-sn-glycero-3-phospho-(1'-sn-glycerol) = an S-1,2-diacyl-sn-glyceryl-L-cysteinyl-[prolipoprotein] + sn-glycerol 1-phosphate + H(+). It participates in protein modification; lipoprotein biosynthesis (diacylglyceryl transfer). In terms of biological role, catalyzes the transfer of the diacylglyceryl group from phosphatidylglycerol to the sulfhydryl group of the N-terminal cysteine of a prolipoprotein, the first step in the formation of mature lipoproteins. This chain is Phosphatidylglycerol--prolipoprotein diacylglyceryl transferase, found in Coxiella burnetii (strain Dugway 5J108-111).